A 302-amino-acid polypeptide reads, in one-letter code: MAGRSLSHLQQLEAESIQIIREVAAEFGNPVMMYSIGKDSSVMLHLARKAFYPGKIPFPLLHVDTGWKFKEMIAFRDAQAKAFGFELLTHTNQEGVEQGVGPFTHGSAKHTDIMKTQGLKQALNKYGFDAAFGGARRDEEKSRAKERVYSFRDKHHRWDPKNQRPELWRTYNGAVNKGESIRVFPLSNWTELDIWQYIYQENIEIVPLYFAAPRAVVNKGGQLIMKDDDRMPLEEGDVESVERVRFRTLGCYPLTAAMPSEADTLEKIIEEMLLTRSSERQGRLIDSDQSASMEQKKRQGYF.

The segment at arginine 280–phenylalanine 302 is disordered.

It belongs to the PAPS reductase family. CysD subfamily. Heterodimer composed of CysD, the smaller subunit, and CysN.

It carries out the reaction sulfate + ATP + H(+) = adenosine 5'-phosphosulfate + diphosphate. The protein operates within sulfur metabolism; hydrogen sulfide biosynthesis; sulfite from sulfate: step 1/3. Its function is as follows. With CysN forms the ATP sulfurylase (ATPS) that catalyzes the adenylation of sulfate producing adenosine 5'-phosphosulfate (APS) and diphosphate, the first enzymatic step in sulfur assimilation pathway. APS synthesis involves the formation of a high-energy phosphoric-sulfuric acid anhydride bond driven by GTP hydrolysis by CysN coupled to ATP hydrolysis by CysD. This chain is Sulfate adenylyltransferase subunit 2, found in Shewanella frigidimarina (strain NCIMB 400).